A 1507-amino-acid chain; its full sequence is Protein TIC 214 (1507 aa).

Transmembrane regions (helical) follow at residues isoleucine 4 to glycine 24, threonine 53 to leucine 73, leucine 81 to tyrosine 101, alanine 129 to phenylalanine 149, isoleucine 163 to leucine 183, and leucine 202 to cysteine 222.

The protein belongs to the TIC214 family. In terms of assembly, part of the Tic complex.

It is found in the plastid. The protein localises to the chloroplast inner membrane. Functionally, involved in protein precursor import into chloroplasts. May be part of an intermediate translocation complex acting as a protein-conducting channel at the inner envelope. This is Protein TIC 214 from Staurastrum punctulatum (Green alga).